The following is a 75-amino-acid chain: Sperm-specific protein PL-I (75 aa).

The 73-residue stretch at 2 to 74 (GSSGMMSMVA…GSAGWVLVPK (73 aa)) folds into the H15 domain.

Belongs to the histone H1/H5 family. As to expression, sperm.

Its subcellular location is the nucleus. It is found in the chromosome. Its function is as follows. Linker histones are implicated in chromatin remodeling and/or transcriptional regulation during spermiogenesis, the process of spermatid maturation into spermatozoa. The chain is Sperm-specific protein PL-I from Spisula solidissima (Atlantic surf-clam).